The chain runs to 364 residues: Alanine racemase (364 aa).

The active-site Proton acceptor; specific for D-alanine is the Lys34. An N6-(pyridoxal phosphate)lysine modification is found at Lys34. Arg129 is a substrate binding site. Tyr259 acts as the Proton acceptor; specific for L-alanine in catalysis. Met307 provides a ligand contact to substrate.

It belongs to the alanine racemase family. It depends on pyridoxal 5'-phosphate as a cofactor.

The catalysed reaction is L-alanine = D-alanine. The protein operates within amino-acid biosynthesis; D-alanine biosynthesis; D-alanine from L-alanine: step 1/1. Its function is as follows. Catalyzes the interconversion of L-alanine and D-alanine. May also act on other amino acids. The sequence is that of Alanine racemase (alr) from Coxiella burnetii (strain RSA 493 / Nine Mile phase I).